A 323-amino-acid polypeptide reads, in one-letter code: AASGVATNTPTANDEEYITPVTIGGTTLNLNFDTGSADLWVFSTELPASQQSGHSVYNPSATGKELSGYTWSISYGDGSSASGNVFTDSVTVGGVTAHGQAVQAAQQISAQFQQDTNNDGLLGLAFSSINTVQPQSQTTFFDTVKSSLAQPLFAVALKHQQPGVYDFGFIDSSKYTGSLTYTGVDNSQGFWSFNVDSYTAGSQSGDGFSGIADTGTTLLLLDDSVVSQYYSQVSGAQQDSNAGGYVFDCSTNLPDFSVSISGYTATVPGSLINYGPSGDGSTCLGGIQSNSGIGFSIFGDIFLKSQYVVFDSDGPQLGFAPQA.

O-linked (Man...) serine glycosylation is present at S3. T7 carries O-linked (Man...) threonine glycosylation. A Peptidase A1 domain is found at 17 to 320; the sequence is YITPVTIGGT…DSDGPQLGFA (304 aa). Catalysis depends on residues D33 and D213. C249 and C283 are oxidised to a cystine.

This sequence belongs to the peptidase A1 family. In terms of assembly, monomer.

Its subcellular location is the secreted. The catalysed reaction is Hydrolysis of proteins with broad specificity similar to that of pepsin A, preferring hydrophobic residues at P1 and P1', but also cleaving 20-Gly-|-Glu-21 in the B chain of insulin. Clots milk, and activates trypsinogen.. Secreted aspartic endopeptidase that allows assimilation of proteinaceous substrates. The scissile peptide bond is attacked by a nucleophilic water molecule activated by two aspartic residues in the active site. Shows a broad primary substrate specificity. Favors hydrophobic residues at the P1 and P1' positions, but can also activate trypsinogen and hydrolyze the B chain of insulin between positions 'Gly-20' and 'Glu-21'. This is Penicillopepsin-1 from Penicillium janthinellum (Penicillium vitale).